The chain runs to 904 residues: Conserved oligomeric Golgi complex subunit 2 (904 aa).

Disordered regions lie at residues 384 to 424 (KEKQ…INNN) and 644 to 669 (IKIT…LNNK). Composition is skewed to low complexity over residues 388–424 (SNNN…INNN) and 652–663 (PSLSNQSPISSS).

Belongs to the COG2 family. In terms of assembly, component of the conserved oligomeric Golgi complex which is composed of eight different subunits and is required for normal Golgi morphology and localization.

Its subcellular location is the golgi apparatus membrane. Functionally, required for normal Golgi function. In Dictyostelium discoideum (Social amoeba), this protein is Conserved oligomeric Golgi complex subunit 2 (cog2).